The following is a 442-amino-acid chain: 3-ketoacyl-CoA thiolase (442 aa).

The active-site Acyl-thioester intermediate is the C105. Residues H398 and C428 each act as proton acceptor in the active site.

This sequence belongs to the thiolase-like superfamily. Thiolase family. Heterotetramer of two alpha chains (FadJ) and two beta chains (FadI).

It is found in the cytoplasm. The enzyme catalyses an acyl-CoA + acetyl-CoA = a 3-oxoacyl-CoA + CoA. The protein operates within lipid metabolism; fatty acid beta-oxidation. In terms of biological role, catalyzes the final step of fatty acid oxidation in which acetyl-CoA is released and the CoA ester of a fatty acid two carbons shorter is formed. In Aliivibrio fischeri (strain ATCC 700601 / ES114) (Vibrio fischeri), this protein is 3-ketoacyl-CoA thiolase.